The sequence spans 87 residues: Exodeoxyribonuclease 7 small subunit (87 aa).

Belongs to the XseB family. In terms of assembly, heterooligomer composed of large and small subunits.

Its subcellular location is the cytoplasm. The catalysed reaction is Exonucleolytic cleavage in either 5'- to 3'- or 3'- to 5'-direction to yield nucleoside 5'-phosphates.. In terms of biological role, bidirectionally degrades single-stranded DNA into large acid-insoluble oligonucleotides, which are then degraded further into small acid-soluble oligonucleotides. This Solidesulfovibrio magneticus (strain ATCC 700980 / DSM 13731 / RS-1) (Desulfovibrio magneticus) protein is Exodeoxyribonuclease 7 small subunit.